A 264-amino-acid polypeptide reads, in one-letter code: Thiazole synthase (264 aa).

The active-site Schiff-base intermediate with DXP is the Lys98. 1-deoxy-D-xylulose 5-phosphate is bound by residues Gly159, Ala185 to Gly186, and Ala207 to Thr208.

Belongs to the ThiG family. As to quaternary structure, homotetramer. Forms heterodimers with either ThiH or ThiS.

The protein resides in the cytoplasm. It carries out the reaction [ThiS sulfur-carrier protein]-C-terminal-Gly-aminoethanethioate + 2-iminoacetate + 1-deoxy-D-xylulose 5-phosphate = [ThiS sulfur-carrier protein]-C-terminal Gly-Gly + 2-[(2R,5Z)-2-carboxy-4-methylthiazol-5(2H)-ylidene]ethyl phosphate + 2 H2O + H(+). It participates in cofactor biosynthesis; thiamine diphosphate biosynthesis. In terms of biological role, catalyzes the rearrangement of 1-deoxy-D-xylulose 5-phosphate (DXP) to produce the thiazole phosphate moiety of thiamine. Sulfur is provided by the thiocarboxylate moiety of the carrier protein ThiS. In vitro, sulfur can be provided by H(2)S. The polypeptide is Thiazole synthase (Mycobacterium ulcerans (strain Agy99)).